Reading from the N-terminus, the 271-residue chain is MPELPEVEVTRQGIAPFLVEQTVVDLVIRNGSLRWPVPDIAKQIIGQVIRQVRRRAKYLLIDTDAGTSIVHLGMSGSLRILPHDTPVEKHDHIDLVLANGRILRFNDPRRFGAWLWCELPEEAHPLLAKLGPEPLTQAFNVAQLAAALAGKKKAIKLCLMDNHIVVGVGNIYANEALFAAGIHPEAEAGKIDIERLTVLVAEVKQILAHAIKQGGTTLKDFTNADGKPGYFAQKLHVYGRGGETCTSCGNLLSEIRLGQRTTVFCGICQTR.

Residue Pro2 is the Schiff-base intermediate with DNA of the active site. The Proton donor role is filled by Glu3. Lys57 acts as the Proton donor; for beta-elimination activity in catalysis. DNA is bound by residues His90, Arg109, and Lys151. The segment at 236–270 (HVYGRGGETCTSCGNLLSEIRLGQRTTVFCGICQT) adopts an FPG-type zinc-finger fold. The Proton donor; for delta-elimination activity role is filled by Arg260.

Belongs to the FPG family. As to quaternary structure, monomer. Zn(2+) serves as cofactor.

The enzyme catalyses Hydrolysis of DNA containing ring-opened 7-methylguanine residues, releasing 2,6-diamino-4-hydroxy-5-(N-methyl)formamidopyrimidine.. It carries out the reaction 2'-deoxyribonucleotide-(2'-deoxyribose 5'-phosphate)-2'-deoxyribonucleotide-DNA = a 3'-end 2'-deoxyribonucleotide-(2,3-dehydro-2,3-deoxyribose 5'-phosphate)-DNA + a 5'-end 5'-phospho-2'-deoxyribonucleoside-DNA + H(+). Functionally, involved in base excision repair of DNA damaged by oxidation or by mutagenic agents. Acts as a DNA glycosylase that recognizes and removes damaged bases. Has a preference for oxidized purines, such as 7,8-dihydro-8-oxoguanine (8-oxoG). Has AP (apurinic/apyrimidinic) lyase activity and introduces nicks in the DNA strand. Cleaves the DNA backbone by beta-delta elimination to generate a single-strand break at the site of the removed base with both 3'- and 5'-phosphates. The polypeptide is Formamidopyrimidine-DNA glycosylase (Shewanella baltica (strain OS155 / ATCC BAA-1091)).